A 149-amino-acid chain; its full sequence is D-aminoacyl-tRNA deacylase (149 aa).

The Gly-cisPro motif, important for rejection of L-amino acids signature appears at 137-138; it reads GP.

It belongs to the DTD family. As to quaternary structure, homodimer.

The protein resides in the cytoplasm. It carries out the reaction glycyl-tRNA(Ala) + H2O = tRNA(Ala) + glycine + H(+). It catalyses the reaction a D-aminoacyl-tRNA + H2O = a tRNA + a D-alpha-amino acid + H(+). In terms of biological role, an aminoacyl-tRNA editing enzyme that deacylates mischarged D-aminoacyl-tRNAs. Also deacylates mischarged glycyl-tRNA(Ala), protecting cells against glycine mischarging by AlaRS. Acts via tRNA-based rather than protein-based catalysis; rejects L-amino acids rather than detecting D-amino acids in the active site. By recycling D-aminoacyl-tRNA to D-amino acids and free tRNA molecules, this enzyme counteracts the toxicity associated with the formation of D-aminoacyl-tRNA entities in vivo and helps enforce protein L-homochirality. The polypeptide is D-aminoacyl-tRNA deacylase (Clostridioides difficile (strain 630) (Peptoclostridium difficile)).